The primary structure comprises 395 residues: uncharacterized protein (395 aa).

2 disordered regions span residues 17–155 (EVKK…QVKT) and 276–304 (EERE…HEQK). Polar residues-rich tracts occupy residues 42 to 71 (DGNN…SNVV) and 81 to 96 (GDAS…NVVK). Basic and acidic residues predominate over residues 103–133 (VAEKPEKEDLAVIESEDKAAKPDGEIKKNVE). Low complexity predominate over residues 134 to 143 (TEVTSRSTSS). Basic and acidic residues-rich tracts occupy residues 144–155 (QEKDELEKQVKT) and 276–290 (EERE…KEQS). Residues 224–351 (LKMNGKEDDL…QRRLKELEAM (128 aa)) are a coiled coil. The segment covering 291 to 300 (SEGSKTANQT) has biased composition (polar residues).

Its subcellular location is the cytoplasm. This is an uncharacterized protein from Schizosaccharomyces pombe (strain 972 / ATCC 24843) (Fission yeast).